The sequence spans 184 residues: ATP synthase subunit b, chloroplastic (184 aa).

A helical membrane pass occupies residues 27–49 (LATNLINLSVVLGVLIFFGKGVL).

This sequence belongs to the ATPase B chain family. In terms of assembly, F-type ATPases have 2 components, F(1) - the catalytic core - and F(0) - the membrane proton channel. F(1) has five subunits: alpha(3), beta(3), gamma(1), delta(1), epsilon(1). F(0) has four main subunits: a(1), b(1), b'(1) and c(10-14). The alpha and beta chains form an alternating ring which encloses part of the gamma chain. F(1) is attached to F(0) by a central stalk formed by the gamma and epsilon chains, while a peripheral stalk is formed by the delta, b and b' chains.

It is found in the plastid. The protein resides in the chloroplast thylakoid membrane. Its function is as follows. F(1)F(0) ATP synthase produces ATP from ADP in the presence of a proton or sodium gradient. F-type ATPases consist of two structural domains, F(1) containing the extramembraneous catalytic core and F(0) containing the membrane proton channel, linked together by a central stalk and a peripheral stalk. During catalysis, ATP synthesis in the catalytic domain of F(1) is coupled via a rotary mechanism of the central stalk subunits to proton translocation. Component of the F(0) channel, it forms part of the peripheral stalk, linking F(1) to F(0). The polypeptide is ATP synthase subunit b, chloroplastic (Manihot esculenta (Cassava)).